A 942-amino-acid chain; its full sequence is Protein inturned (942 aa).

Residues 1-13 (MADPARRDPRGRA) show a composition bias toward basic and acidic residues. Disordered stretches follow at residues 1–54 (MADP…LEPE) and 129–150 (PKRHHKKKSSNTGPVSILKHQS). Acidic residues predominate over residues 22-32 (SQEEEEEESDS). Over residues 33-48 (DAGASSLGSCSSASSD) the composition is skewed to low complexity. A compositionally biased stretch (polar residues) spans 138–150 (SNTGPVSILKHQS). In terms of domain architecture, PDZ spans 189–267 (LVGVIHQTKW…PMQVKLTFEN (79 aa)). Phosphoserine occurs at positions 674 and 678. The segment at 707–752 (KARKPSPSRIGGGREPGEGEENVGLSPHTTPDTVRKQRESEGSDDN) is disordered.

The protein belongs to the inturned family. Component of the CPLANE (ciliogenesis and planar polarity effectors) complex, composed of INTU, FUZ and WDPCP. Interacts with CPLANE1. Interacts with NPHP4 and DAAM1; INTU is mediating the interaction between NPHP4 and DAAM1.

It localises to the cytoplasm. It is found in the cell surface. The protein localises to the cytoskeleton. Its subcellular location is the cilium basal body. The protein resides in the microtubule organizing center. It localises to the centrosome. It is found in the centriole. Plays a key role in ciliogenesis and embryonic development. Regulator of cilia formation by controlling the organization of the apical actin cytoskeleton and the positioning of the basal bodies at the apical cell surface, which in turn is essential for the normal orientation of elongating ciliary microtubules. Plays a key role in definition of cell polarity via its role in ciliogenesis but not via conversion extension. Has an indirect effect on hedgehog signaling. Proposed to function as core component of the CPLANE (ciliogenesis and planar polarity effectors) complex involved in the recruitment of peripheral IFT-A proteins to basal bodies. Required for recruitment of CPLANE2 to the mother centriole. Binds phosphatidylinositol 3-phosphate with highest affinity, followed by phosphatidylinositol 4-phosphate and phosphatidylinositol 5-phosphate. This is Protein inturned (Intu) from Rattus norvegicus (Rat).